Here is a 544-residue protein sequence, read N- to C-terminus: CTP synthase (544 aa).

The segment at 1–265 (MTRYIFITGG…DTQVLAYFGL (265 aa)) is amidoligase domain. Ser-13 contributes to the CTP binding site. UTP is bound at residue Ser-13. ATP is bound at residue 14-19 (SLGKGL). Tyr-54 serves as a coordination point for L-glutamine. Asp-71 serves as a coordination point for ATP. Residues Asp-71 and Glu-139 each coordinate Mg(2+). Residues 146–148 (DIE), 186–191 (KTKPTQ), and Lys-222 contribute to the CTP site. UTP contacts are provided by residues 186–191 (KTKPTQ) and Lys-222. An ATP-binding site is contributed by Val-240. The 253-residue stretch at 291 to 543 (TIAVVGKYTS…IKAAIEQSRL (253 aa)) folds into the Glutamine amidotransferase type-1 domain. L-glutamine is bound at residue Gly-353. Cys-380 (nucleophile; for glutamine hydrolysis) is an active-site residue. Residues 381–384 (FGMQ), Glu-404, and Arg-472 contribute to the L-glutamine site. Catalysis depends on residues His-516 and Glu-518.

It belongs to the CTP synthase family. In terms of assembly, homotetramer.

The enzyme catalyses UTP + L-glutamine + ATP + H2O = CTP + L-glutamate + ADP + phosphate + 2 H(+). It catalyses the reaction L-glutamine + H2O = L-glutamate + NH4(+). It carries out the reaction UTP + NH4(+) + ATP = CTP + ADP + phosphate + 2 H(+). Its pathway is pyrimidine metabolism; CTP biosynthesis via de novo pathway; CTP from UDP: step 2/2. With respect to regulation, allosterically activated by GTP, when glutamine is the substrate; GTP has no effect on the reaction when ammonia is the substrate. The allosteric effector GTP functions by stabilizing the protein conformation that binds the tetrahedral intermediate(s) formed during glutamine hydrolysis. Inhibited by the product CTP, via allosteric rather than competitive inhibition. In terms of biological role, catalyzes the ATP-dependent amination of UTP to CTP with either L-glutamine or ammonia as the source of nitrogen. Regulates intracellular CTP levels through interactions with the four ribonucleotide triphosphates. The chain is CTP synthase from Azospirillum brasilense.